Here is a 286-residue protein sequence, read N- to C-terminus: Shikimate dehydrogenase (NADP(+)) (286 aa).

Residues 19-21 (SVS) and Thr66 each bind shikimate. Residue Lys70 is the Proton acceptor of the active site. 2 residues coordinate shikimate: Asn91 and Asp106. NADP(+) contacts are provided by residues 130 to 134 (GAGGS) and Ala225. Tyr227 lines the shikimate pocket. Residue Gly248 coordinates NADP(+).

The protein belongs to the shikimate dehydrogenase family. In terms of assembly, homodimer.

The catalysed reaction is shikimate + NADP(+) = 3-dehydroshikimate + NADPH + H(+). The protein operates within metabolic intermediate biosynthesis; chorismate biosynthesis; chorismate from D-erythrose 4-phosphate and phosphoenolpyruvate: step 4/7. Its function is as follows. Involved in the biosynthesis of the chorismate, which leads to the biosynthesis of aromatic amino acids. Catalyzes the reversible NADPH linked reduction of 3-dehydroshikimate (DHSA) to yield shikimate (SA). This chain is Shikimate dehydrogenase (NADP(+)), found in Dehalococcoides mccartyi (strain CBDB1).